The primary structure comprises 66 residues: Beta-toxin Cb3 (66 aa).

The 66-residue stretch at 1–66 (KEGYIVNYYD…VWPLPNKTCL (66 aa)) folds into the LCN-type CS-alpha/beta domain. 4 disulfide bridges follow: Cys-12–Cys-65, Cys-16–Cys-41, Cys-25–Cys-46, and Cys-29–Cys-48.

Belongs to the long (4 C-C) scorpion toxin superfamily. Sodium channel inhibitor family. Beta subfamily. Expressed by the venom gland.

It localises to the secreted. Beta toxins bind voltage-independently at site-4 of sodium channels (Nav) and reduces peak current and shifts the voltage of activation toward more negative potentials thereby affecting sodium channel activation and promoting spontaneous and repetitive firing. Has an inhibitory effect on voltage-gated sodium channels hNav1.1/SCN1A, hNav1.2/SCN2A, hNav1.4/SCN4A and hNav1.6/SCN8A. Reduces the peak current of hNav1.5/SCN5A but does not shift its voltage of activation. Also affects the inactivation processes of hNav1.1/SCN1A, hNav1.4/SCN4A, hNav1.5/SCN5A and hNav1.6/SCN8A. This toxin is active against mammals and lethal to mice. The chain is Beta-toxin Cb3 from Centruroides baergi (Scorpion).